The sequence spans 207 residues: Outer-membrane lipoprotein LolB (207 aa).

The signal sequence occupies residues 1–21 (MPMRKRHFYRLLPLASLLLAA). Cysteine 22 carries N-palmitoyl cysteine lipidation. The S-diacylglycerol cysteine moiety is linked to residue cysteine 22.

It belongs to the LolB family. Monomer.

Its subcellular location is the cell outer membrane. Its function is as follows. Plays a critical role in the incorporation of lipoproteins in the outer membrane after they are released by the LolA protein. In Yersinia pseudotuberculosis serotype O:3 (strain YPIII), this protein is Outer-membrane lipoprotein LolB.